The following is a 496-amino-acid chain: Cytochrome P450 monooxygenase ausR (496 aa).

Residues 12-32 (IGLYILWTIPVLFVIFKLLAP) form a helical membrane-spanning segment. Cysteine 435 contacts heme.

The protein belongs to the cytochrome P450 family. Heme serves as cofactor.

The protein localises to the membrane. Its pathway is secondary metabolite biosynthesis; terpenoid biosynthesis. Functionally, cytochrome P450 monooxygenase; part of the gene cluster B that mediates the biosynthesis of the fungal meroterpenoid acetoxydehydroaustin. The first step of the pathway is the synthesis of 3,5-dimethylorsellinic acid by the polyketide synthase ausA. 3,5-dimethylorsellinic acid is then prenylated by the polyprenyl transferase ausN. Further epoxidation by the FAD-dependent monooxygenase ausM and cyclization by the probable terpene cyclase ausL lead to the formation of protoaustinoid A. Protoaustinoid A is then oxidized to spiro-lactone preaustinoid A3 by the combined action of the FAD-binding monooxygenases ausB and ausC, and the dioxygenase ausE. Acid-catalyzed keto-rearrangement and ring contraction of the tetraketide portion of preaustinoid A3 by ausJ lead to the formation of preaustinoid A4. The aldo-keto reductase ausK, with the help of ausH, is involved in the next step by transforming preaustinoid A4 into isoaustinone which is in turn hydroxylated by the P450 monooxygenase ausI to form austinolide. The cytochrome P450 monooxygenase ausG then modifies austinolide to austinol. Austinol is further acetylated to austin by the O-acetyltransferase ausP, which spontaneously changes to dehydroaustin. The cytochrome P450 monooxygenase then converts dehydroaustin is into 7-dehydrodehydroaustin. The hydroxylation catalyzed by ausR permits the second O-acetyltransferase ausQ to add an additional acetyl group to the molecule, leading to the formation of acetoxydehydroaustin. Due to genetic rearrangements of the clusters and the subsequent loss of some enzymes, the end product of the Penicillium brasilianum austinoid biosynthesis clusters is acetoxydehydroaustin. The polypeptide is Cytochrome P450 monooxygenase ausR (Penicillium brasilianum).